Consider the following 82-residue polypeptide: ATP synthase subunit c (82 aa).

2 helical membrane-spanning segments follow: residues 3–23 (PLIA…ASLG) and 57–77 (LAFM…LLFA).

In terms of assembly, F-type ATPases have 2 components, F(1) - the catalytic core - and F(0) - the membrane proton channel. F(1) has five subunits: alpha(3), beta(3), gamma(1), delta(1), epsilon(1). F(0) has four main subunits: a(1), b(1), b'(1) and c(10-14). The alpha and beta chains form an alternating ring which encloses part of the gamma chain. F(1) is attached to F(0) by a central stalk formed by the gamma and epsilon chains, while a peripheral stalk is formed by the delta, b and b' chains.

It is found in the cellular thylakoid membrane. Inhibited by dicyclohexylcarbodiimide. F(1)F(0) ATP synthase produces ATP from ADP in the presence of a proton or sodium gradient. F-type ATPases consist of two structural domains, F(1) containing the extramembraneous catalytic core and F(0) containing the membrane proton channel, linked together by a central stalk and a peripheral stalk. During catalysis, ATP synthesis in the catalytic domain of F(1) is coupled via a rotary mechanism of the central stalk subunits to proton translocation. In terms of biological role, key component of the F(0) channel; it plays a direct role in translocation across the membrane. A homomeric c-ring of between 10-14 subunits forms the central stalk rotor element with the F(1) delta and epsilon subunits. Its function is as follows. The complex from the organism is particularly stable to disruption and remains functional after 6 hrs at 55 degrees Celsius. This chain is ATP synthase subunit c (atpE), found in Thermosynechococcus vestitus (strain NIES-2133 / IAM M-273 / BP-1).